The following is a 306-amino-acid chain: MTNPIYLILADFFDRYIGEPPEKIHPVVFIGKLICFFENVFKSTNSVNKTRDLLFGFLNVILVLAIVFFMTYEIEQIINSISNSYIKISIYSIILSFSIGHKSLIEFSKAPIKFIVNNDLEGAKKSVQCIVSRNTSELDKKHILSASIESASENITDSIIAPLIYAAIFGLPGAFLYRAVNTFDAMIGYKSEKYQYYGKTAAYLDDILNFIPSRIAGMLLIISAPFYGGNIKSAIYGYFNEGNKTPSPNSGYTMATLANSLNMELEKIGYYKLGKGEITIEKALNSLKAVDYSVLLFLIIYTVLLM.

Helical transmembrane passes span 54-74 (LFGF…TYEI), 88-108 (ISIY…IEFS), 155-175 (ITDS…PGAF), 215-235 (IAGM…KSAI), and 286-306 (SLKA…VLLM).

The protein belongs to the CobD/CbiB family.

It is found in the cell membrane. It functions in the pathway cofactor biosynthesis; adenosylcobalamin biosynthesis. In terms of biological role, converts cobyric acid to cobinamide by the addition of aminopropanol on the F carboxylic group. In Methanococcus maripaludis (strain C7 / ATCC BAA-1331), this protein is Probable cobalamin biosynthesis protein CobD.